A 367-amino-acid polypeptide reads, in one-letter code: Zorya protein ZorE (367 aa).

Its function is as follows. Component of antiviral defense system Zorya type II, composed of ZorA, ZorB and ZorE. Expression of Zorya type II in E.coli (strain MG1655) confers resistance to phages SECphi7 and T7. While most T7 infected Zorya-containing cells undergo abortive infection, a minority produce viable phage progeny. These eventually accumulate to a high multiplicity of infection, leading to culture collapse by 170 minutes after initial infection. ZorA and ZorB probably assemble in the cell inner membrane and exert their effect there. This may be a nuclease. The chain is Zorya protein ZorE from Escherichia coli (strain ATCC 8739 / DSM 1576 / NBRC 3972 / NCIMB 8545 / WDCM 00012 / Crooks).